The chain runs to 508 residues: MSTAPNAKNNISLKKSVGDVFRLTAKRVLMRVDFNVPMQNGHITNDYRIRAAIPTIRRVIDQGGICILLSHLGRPRGVSMVAGVRDIRRRYHEAQFHDNKGKTAFFSVLPGEEKVKILAKSSAREEATHISPEVKSGKTMLFARLPEDEKKSLLMQYLNENKDSALPQMSVSAGYEEQYSLRPVAVRLAELLGQHVYFAHDCLDARVEVSRLKRGNVMLLENVRFYSEENGENAEEREAMAKILASYGDVYISDAFGAAHRDSATMTGIPKILGHGAAGYLMEKEISYFAKVLGNPPRPLVAIVGGAKVSEKIQLLDNMLQRIDYLLIGGAMAYTFLKAQGYSIGKSKCEESKLEFARSLLKKAEDRKVQIILPIDHVCHTEFKAVDSPLITEDQNIPEGHMALDIGPKTIEKYVQTIGKCKSAIWNGPMGVFEMVPYSKGTFAIAKAMGRGTQKRGLMSIIGGGESAGAAELCGKLSISHVSTGGGASLELLEGKTLPGVAVLDDKE.

Residues valine 32, aspartate 33, phenylalanine 34, asparagine 35, arginine 48, serine 70, histidine 71, glycine 73, arginine 74, arginine 224, histidine 260, and arginine 261 each coordinate (2R)-3-phosphoglycerate. 2 residues coordinate ADP: glycine 306 and alanine 307. Glycine 306 contacts CDP. AMP is bound by residues alanine 307 and lysine 308. Alanine 307 is a binding site for ATP. Residue alanine 307 participates in Mg(2+) binding. Lysine 308 provides a ligand contact to (2R)-3-phosphoglycerate. A CDP-binding site is contributed by glutamate 311. Residue glutamate 311 coordinates Mg(2+). ADP is bound by residues lysine 312 and glycine 330. Lysine 312 contacts AMP. An ATP-binding site is contributed by lysine 312. Residue glycine 330 coordinates CDP. 2 residues coordinate AMP: alanine 331 and alanine 403. ATP contacts are provided by alanine 331 and alanine 403. Residues alanine 403 and asparagine 427 each contribute to the ADP site. The CDP site is built by glycine 428 and phenylalanine 433. Positions 433, 434, 466, and 467 each coordinate ADP. Glutamate 434 lines the AMP pocket. 3 residues coordinate ATP: glutamate 434, glutamate 466, and serine 467. Glutamate 466 is a binding site for Mg(2+).

It belongs to the phosphoglycerate kinase family. Monomer. Mg(2+) serves as cofactor.

It carries out the reaction (2R)-3-phosphoglycerate + ATP = (2R)-3-phospho-glyceroyl phosphate + ADP. It participates in carbohydrate degradation; glycolysis; pyruvate from D-glyceraldehyde 3-phosphate: step 2/5. This is Phosphoglycerate kinase A from Trypanosoma brucei brucei.